The following is a 347-amino-acid chain: Fc receptor-like A (347 aa).

An N-terminal signal peptide occupies residues 1 to 27; the sequence is MKLSCMLIEWALYVCPAVLLATQMSLA. Ig-like C2-type domains lie at 77 to 166 and 179 to 257; these read PFHL…ETAS and PVLK…RQIS. 2 cysteine pairs are disulfide-bonded: Cys106/Cys150 and Cys199/Cys247. Positions 272 to 296 are disordered; the sequence is KPATPETPPPAKAPGPLPLLPTPSD. Positions 276 to 292 are enriched in pro residues; that stretch reads PETPPPAKAPGPLPLLP.

As to quaternary structure, monomer or homodimer; disulfide-linked.

It is found in the cytoplasm. Functionally, may be implicated in B-cell differentiation and lymphomagenesis. This Rattus norvegicus (Rat) protein is Fc receptor-like A (Fcrla).